The sequence spans 531 residues: GPI alpha-1,2-mannosyltransferase 3 (531 aa).

A glycan (N-linked (GlcNAc...) asparagine) is linked at asparagine 84. The next 3 helical transmembrane spans lie at 99 to 119 (GLRGFSYPLMFAAIYKVLYLL), 124 to 144 (VWFLIWIPRLAQAVLSGIADV), and 174 to 196 (YCATRTLTNTMEAVLSTFALYYY). N-linked (GlcNAc...) asparagine glycosylation is present at asparagine 204. 6 consecutive transmembrane segments (helical) span residues 210 to 230 (LICVALAFLIRPTAVILWIPL), 249 to 269 (YLPIGILTLAASLTVDRIFFG), 303 to 323 (GVPVILCTHLPFFIHGCMVTP), 328 to 348 (ILLVAVAWTVLTYSALSHKEF), 350 to 370 (FIYPVLPVCMVFCGFSFSNLK), and 375 to 395 (AAVGFLVLSNLFPALYTGLIH). Residues asparagine 414 and asparagine 476 are each glycosylated (N-linked (GlcNAc...) asparagine).

It belongs to the glycosyltransferase 22 family. PIGB subfamily.

Its subcellular location is the endoplasmic reticulum membrane. The protein operates within glycolipid biosynthesis; glycosylphosphatidylinositol-anchor biosynthesis. Functionally, alpha-1,2-mannosyltransferase that catalyzes the transfer of the third mannose, via an alpha-1,2 bond, from a dolichol-phosphate-mannose (Dol-P-Man) to an alpha-D-Man-(1-&gt;6)-2-PEtn-alpha-D-Man-(1-&gt;4)-alpha-D-GlcN-(1-&gt;6)-(1-radyl,2-acyl-sn-glycero-3-phospho)-2-acyl-inositol intermediate to generate an alpha-D-Man-(1-&gt;2)-alpha-D-Man-(1-&gt;6)-2-PEtn-alpha-D-Man-(1-&gt;4)-alpha-D-GlcN-(1-&gt;6)-(1-radyl,2-acyl-sn-glycero-3-phospho)-2-acyl-inositol (also termed H6) and participates in the nineth step of the glycosylphosphatidylinositol-anchor biosynthesis. May also add the third mannose to an alpha-D-Man-(1-&gt;6)-alpha-D-Man-(1-&gt;4)-alpha-D-GlcN-(1-&gt;6)-(1-radyl,2-acyl-sn-glycero-3-phospho)-2-acyl-inositol (also termed H3) intermediate generating an alpha-D-Man-(1-&gt;2)-alpha-D-Man-(1-&gt;6)-alpha-D-Man-(1-&gt;4)-alpha-D-GlcN-(1-&gt;6)-(1-radyl,2-acyl-sn-glycero-3-phospho)-2-acyl-inositol (also termed H4). The protein is GPI alpha-1,2-mannosyltransferase 3 of Xenopus laevis (African clawed frog).